The chain runs to 652 residues: UvrABC system protein C (652 aa).

The GIY-YIG domain occupies 19 to 96 (KTSGVYLWKD…IKKHKPRYNI (78 aa)). The region spanning 203–238 (EDVSGTLKEKMKEAAEKKEFEKAARLRDGIQAVYAL) is the UVR domain.

The protein belongs to the UvrC family. Interacts with UvrB in an incision complex.

Its subcellular location is the cytoplasm. Functionally, the UvrABC repair system catalyzes the recognition and processing of DNA lesions. UvrC both incises the 5' and 3' sides of the lesion. The N-terminal half is responsible for the 3' incision and the C-terminal half is responsible for the 5' incision. In Treponema denticola (strain ATCC 35405 / DSM 14222 / CIP 103919 / JCM 8153 / KCTC 15104), this protein is UvrABC system protein C.